Reading from the N-terminus, the 217-residue chain is Adenylate kinase (217 aa).

10–15 (GAGKGT) contributes to the ATP binding site. Residues 30 to 59 (STGDIFRKNVADDTPLGRLAKQYMDAGDLV) form an NMP region. AMP contacts are provided by residues Thr-31, Arg-36, 57–59 (DLV), 85–88 (GFPR), and Gln-92. The segment at 126–163 (GRRTCADCAHVWHVTYDPPTVDGVCDLCGGKLFQREDD) is LID. Arg-127 is an ATP binding site. 4 residues coordinate Zn(2+): Cys-130, Cys-133, Cys-150, and Cys-153. Positions 160 and 171 each coordinate AMP. Gly-199 contacts ATP.

Belongs to the adenylate kinase family. Monomer.

The protein localises to the cytoplasm. The catalysed reaction is AMP + ATP = 2 ADP. It functions in the pathway purine metabolism; AMP biosynthesis via salvage pathway; AMP from ADP: step 1/1. Catalyzes the reversible transfer of the terminal phosphate group between ATP and AMP. Plays an important role in cellular energy homeostasis and in adenine nucleotide metabolism. In Acidothermus cellulolyticus (strain ATCC 43068 / DSM 8971 / 11B), this protein is Adenylate kinase.